Here is a 257-residue protein sequence, read N- to C-terminus: NH(3)-dependent NAD(+) synthetase (257 aa).

28–35 (GISGGVDS) serves as a coordination point for ATP. A Mg(2+)-binding site is contributed by Asp-34. Arg-109 contacts deamido-NAD(+). ATP is bound at residue Thr-129. Residue Glu-134 participates in Mg(2+) binding. Deamido-NAD(+)-binding residues include Lys-142 and Asp-149. Residues Lys-158 and Ser-180 each contribute to the ATP site. 240–241 (HK) lines the deamido-NAD(+) pocket.

Belongs to the NAD synthetase family. Homodimer.

It carries out the reaction deamido-NAD(+) + NH4(+) + ATP = AMP + diphosphate + NAD(+) + H(+). It functions in the pathway cofactor biosynthesis; NAD(+) biosynthesis; NAD(+) from deamido-NAD(+) (ammonia route): step 1/1. Catalyzes the ATP-dependent amidation of deamido-NAD to form NAD. Uses ammonia as a nitrogen source. The sequence is that of NH(3)-dependent NAD(+) synthetase from Pyrococcus furiosus (strain ATCC 43587 / DSM 3638 / JCM 8422 / Vc1).